Consider the following 293-residue polypeptide: Polyamine aminopropyltransferase (293 aa).

Residues histidine 10–lysine 244 enclose the PABS domain. Glutamine 39 is an S-methyl-5'-thioadenosine binding site. Spermidine is bound by residues histidine 70 and aspartate 94. Residues glutamate 114 and aspartate 145–glycine 146 each bind S-methyl-5'-thioadenosine. Aspartate 163 serves as the catalytic Proton acceptor. Residue aspartate 163–aspartate 166 coordinates spermidine. Proline 170 is an S-methyl-5'-thioadenosine binding site.

It belongs to the spermidine/spermine synthase family. Homodimer or homotetramer.

It localises to the cytoplasm. It carries out the reaction S-adenosyl 3-(methylsulfanyl)propylamine + putrescine = S-methyl-5'-thioadenosine + spermidine + H(+). The protein operates within amine and polyamine biosynthesis; spermidine biosynthesis; spermidine from putrescine: step 1/1. In terms of biological role, catalyzes the irreversible transfer of a propylamine group from the amino donor S-adenosylmethioninamine (decarboxy-AdoMet) to putrescine (1,4-diaminobutane) to yield spermidine. The sequence is that of Polyamine aminopropyltransferase from Methanocaldococcus jannaschii (strain ATCC 43067 / DSM 2661 / JAL-1 / JCM 10045 / NBRC 100440) (Methanococcus jannaschii).